Reading from the N-terminus, the 553-residue chain is Chaperonin GroEL 1 (553 aa).

Residues 29–32 (TIGP), 86–90 (DGTTT), Gly-413, 476–478 (NAL), and Asp-492 contribute to the ATP site. Positions 521–542 (KPEPPAAPAPGGDPMGGMGGMG) are disordered. Residues 533–542 (DPMGGMGGMG) show a composition bias toward gly residues.

This sequence belongs to the chaperonin (HSP60) family. Forms a cylinder of 14 subunits composed of two heptameric rings stacked back-to-back. Interacts with the co-chaperonin GroES.

It is found in the cytoplasm. The enzyme catalyses ATP + H2O + a folded polypeptide = ADP + phosphate + an unfolded polypeptide.. In terms of biological role, together with its co-chaperonin GroES, plays an essential role in assisting protein folding. The GroEL-GroES system forms a nano-cage that allows encapsulation of the non-native substrate proteins and provides a physical environment optimized to promote and accelerate protein folding. The protein is Chaperonin GroEL 1 of Synechococcus sp. (strain WH7803).